The primary structure comprises 187 residues: UPF0301 protein plu1183 (187 aa).

It belongs to the UPF0301 (AlgH) family.

The chain is UPF0301 protein plu1183 from Photorhabdus laumondii subsp. laumondii (strain DSM 15139 / CIP 105565 / TT01) (Photorhabdus luminescens subsp. laumondii).